A 379-amino-acid polypeptide reads, in one-letter code: MAPNIRKSHPLLKMINNSLIDLPSPSNISAWWNFGSLLGICLITQILTGLLLATHYTADTHLAFSSVSHICRDVQYGWLIRNLHANGASFFFICIYLHIGRGLYYGSYLYKETWNIGIILLLTLMATAFVGYVLPWGQMSFWGATVITNLLSAIPYIGQALVEWAWGGFSVDNPTLTRFFALHFLLPFLIVSLSIIHLTFLHESGSNNPLGIISQSDKIPFHPYFTTKDMLGFTLMFFPLLTLAFFFPNFLGDPENFTPANPLITPPHIKPEWYFLFAYAILRSIPNKLGGVLALTASVLILFLSPLLHASKMRSLTFRPMSQLLFWLLIANLLILTWIGSQPVEDPFIIIGQVASFTYFFTLLFLFPITATLENKILY.

Transmembrane regions (helical) follow at residues 34-54 (FGSL…LLAT), 78-99 (WLIR…YLHI), 114-134 (WNIG…GYVL), and 179-199 (FFAL…IHLT). Residues histidine 84 and histidine 98 each contribute to the heme b site. Heme b-binding residues include histidine 183 and histidine 197. Histidine 202 serves as a coordination point for a ubiquinone. 4 helical membrane passes run 227–247 (TKDM…AFFF), 289–309 (LGGV…PLLH), 321–341 (MSQL…WIGS), and 348–368 (FIII…FLFP).

It belongs to the cytochrome b family. The cytochrome bc1 complex contains 11 subunits: 3 respiratory subunits (MT-CYB, CYC1 and UQCRFS1), 2 core proteins (UQCRC1 and UQCRC2) and 6 low-molecular weight proteins (UQCRH/QCR6, UQCRB/QCR7, UQCRQ/QCR8, UQCR10/QCR9, UQCR11/QCR10 and a cleavage product of UQCRFS1). This cytochrome bc1 complex then forms a dimer. It depends on heme b as a cofactor.

The protein resides in the mitochondrion inner membrane. Functionally, component of the ubiquinol-cytochrome c reductase complex (complex III or cytochrome b-c1 complex) that is part of the mitochondrial respiratory chain. The b-c1 complex mediates electron transfer from ubiquinol to cytochrome c. Contributes to the generation of a proton gradient across the mitochondrial membrane that is then used for ATP synthesis. The polypeptide is Cytochrome b (MT-CYB) (Tinamus major (Great tinamou)).